Here is a 132-residue protein sequence, read N- to C-terminus: Transthyretin-like protein 16 (132 aa).

Positions 1-19 are cleaved as a signal peptide; sequence MRSLVVCLLLAACALECTA. Residue Asn-23 is glycosylated (N-linked (GlcNAc...) asparagine).

The protein belongs to the nematode transthyretin-like family.

The protein localises to the secreted. The polypeptide is Transthyretin-like protein 16 (ttr-16) (Caenorhabditis elegans).